A 255-amino-acid chain; its full sequence is Pimeloyl-[acyl-carrier protein] methyl ester esterase (255 aa).

Substrate is bound by residues tryptophan 18, 78-79 (SL), and 139-143 (FLALD). Serine 78 (nucleophile) is an active-site residue. Residues aspartate 203 and histidine 233 contribute to the active site. A substrate-binding site is contributed by histidine 233.

The protein belongs to the AB hydrolase superfamily. Carboxylesterase BioH family. As to quaternary structure, monomer.

It is found in the cytoplasm. The catalysed reaction is 6-carboxyhexanoyl-[ACP] methyl ester + H2O = 6-carboxyhexanoyl-[ACP] + methanol + H(+). The protein operates within cofactor biosynthesis; biotin biosynthesis. Its function is as follows. The physiological role of BioH is to remove the methyl group introduced by BioC when the pimeloyl moiety is complete. It allows to synthesize pimeloyl-ACP via the fatty acid synthetic pathway through the hydrolysis of the ester bonds of pimeloyl-ACP esters. In Xylella fastidiosa (strain 9a5c), this protein is Pimeloyl-[acyl-carrier protein] methyl ester esterase.